We begin with the raw amino-acid sequence, 109 residues long: UPF0102 protein Suden_1901 (109 aa).

This sequence belongs to the UPF0102 family.

The chain is UPF0102 protein Suden_1901 from Sulfurimonas denitrificans (strain ATCC 33889 / DSM 1251) (Thiomicrospira denitrificans (strain ATCC 33889 / DSM 1251)).